Here is a 131-residue protein sequence, read N- to C-terminus: Ponticulin-like protein M (131 aa).

The signal sequence occupies residues 1–19; that stretch reads MKFLSTLILLLSVLALVRG. S106 carries the GPI-like-anchor amidated serine lipid modification. Residues 107 to 131 constitute a propeptide, removed in mature form; that stretch reads NSASSPLTTAVLFVVAFAAAIALLL.

The protein belongs to the ponticulin family. The GPI-like-anchor contains a phosphoceramide group, rather than a phosphatidyl group.

It localises to the cell membrane. Binds F-actin and nucleates actin assembly. The protein is Ponticulin-like protein M (ponM) of Dictyostelium discoideum (Social amoeba).